The chain runs to 635 residues: 1-deoxy-D-xylulose-5-phosphate synthase (635 aa).

Residues His78 and 119–121 contribute to the thiamine diphosphate site; that span reads GHA. A Mg(2+)-binding site is contributed by Asp151. Residues 152 to 153, Asn180, and Tyr291 contribute to the thiamine diphosphate site; that span reads GA. Position 180 (Asn180) interacts with Mg(2+). The tract at residues 305-325 is disordered; it reads PAFEDRGGTPVTRGSDGRPPY. Glu374 is a thiamine diphosphate binding site.

It belongs to the transketolase family. DXPS subfamily. As to quaternary structure, homodimer. It depends on Mg(2+) as a cofactor. The cofactor is thiamine diphosphate.

It catalyses the reaction D-glyceraldehyde 3-phosphate + pyruvate + H(+) = 1-deoxy-D-xylulose 5-phosphate + CO2. It functions in the pathway metabolic intermediate biosynthesis; 1-deoxy-D-xylulose 5-phosphate biosynthesis; 1-deoxy-D-xylulose 5-phosphate from D-glyceraldehyde 3-phosphate and pyruvate: step 1/1. Functionally, catalyzes the acyloin condensation reaction between C atoms 2 and 3 of pyruvate and glyceraldehyde 3-phosphate to yield 1-deoxy-D-xylulose-5-phosphate (DXP). The chain is 1-deoxy-D-xylulose-5-phosphate synthase from Rhodopirellula baltica (strain DSM 10527 / NCIMB 13988 / SH1).